A 198-amino-acid polypeptide reads, in one-letter code: Transmembrane gamma-carboxyglutamic acid protein 2 (198 aa).

The signal sequence occupies residues 1–17; sequence MRGRPSLLLVYMGLATC. Residues 18 to 51 constitute a propeptide that is removed on maturation; it reads LDTSPHREQNQVLDIFLDAPEAQSFLVGRRRFPR. The 47-residue stretch at 52–98 folds into the Gla domain; sequence ANHWDLELLTPGNLERECLEERCSWEEAREYFEDNTLTERFWESYTY. At 52 to 111 the chain is on the extracellular side; sequence ANHWDLELLTPGNLERECLEERCSWEEAREYFEDNTLTERFWESYTYNGKGGRGRVDVAG. Cysteine 69 and cysteine 74 form a disulfide bridge. Glutamate 72 is subject to 4-carboxyglutamate. The chain crosses the membrane as a helical span at residues 112–132; the sequence is LAVGLTSGILLIVLAGLGAFW. Over 133–198 the chain is Cytoplasmic; the sequence is YLHYRRRRLR…PPYSSLRRPH (66 aa). The disordered stretch occupies residues 156–198; the sequence is PLSPQTPQSPPLPPGLPTYEQALAASGVHDAPPPPYSSLRRPH. Over residues 162-171 the composition is skewed to pro residues; the sequence is PQSPPLPPGL. Residues 171–174 carry the LPXY motif; mediates binding to WW domain-containing proteins motif; sequence LPTY. The PPXY motif; mediates binding to WW domain-containing proteins signature appears at 188-191; that stretch reads PPPY.

In terms of assembly, interacts with NEDD4. Interacts with transcriptional coactivator YAP1. Post-translationally, gamma-carboxyglutamate residues are formed by vitamin K dependent carboxylation. These residues are essential for the binding of calcium.

The protein localises to the cell membrane. In Mus musculus (Mouse), this protein is Transmembrane gamma-carboxyglutamic acid protein 2 (Prrg2).